Here is a 206-residue protein sequence, read N- to C-terminus: Dephospho-CoA kinase (206 aa).

A DPCK domain is found at 4 to 204; that stretch reads IVGLTGGIGS…QFYLQQAENK (201 aa). Position 12–17 (12–17) interacts with ATP; it reads GSGKTT.

This sequence belongs to the CoaE family.

It is found in the cytoplasm. It catalyses the reaction 3'-dephospho-CoA + ATP = ADP + CoA + H(+). It functions in the pathway cofactor biosynthesis; coenzyme A biosynthesis; CoA from (R)-pantothenate: step 5/5. In terms of biological role, catalyzes the phosphorylation of the 3'-hydroxyl group of dephosphocoenzyme A to form coenzyme A. The polypeptide is Dephospho-CoA kinase (Haemophilus influenzae (strain 86-028NP)).